The following is a 182-amino-acid chain: Adenine phosphoribosyltransferase (182 aa).

It belongs to the purine/pyrimidine phosphoribosyltransferase family. In terms of assembly, homodimer.

It localises to the cytoplasm. It carries out the reaction AMP + diphosphate = 5-phospho-alpha-D-ribose 1-diphosphate + adenine. It participates in purine metabolism; AMP biosynthesis via salvage pathway; AMP from adenine: step 1/1. In terms of biological role, catalyzes a salvage reaction resulting in the formation of AMP, that is energically less costly than de novo synthesis. The sequence is that of Adenine phosphoribosyltransferase from Bordetella avium (strain 197N).